A 447-amino-acid polypeptide reads, in one-letter code: Adenylosuccinate synthetase (447 aa).

Residues 12–18 and 40–42 contribute to the GTP site; these read GDEGKGK and GHT. The active-site Proton acceptor is Asp13. 2 residues coordinate Mg(2+): Asp13 and Gly40. Residues 13–16, 38–41, Thr128, Arg142, Gln223, Thr238, and Arg302 each bind IMP; these read DEGK and NAGH. His41 acts as the Proton donor in catalysis. 298–304 provides a ligand contact to substrate; that stretch reads TTTGRRR. GTP contacts are provided by residues Arg304, 330–332, and 412–414; these read KLD and SLG.

Belongs to the adenylosuccinate synthetase family. Homodimer. Requires Mg(2+) as cofactor.

Its subcellular location is the cytoplasm. The catalysed reaction is IMP + L-aspartate + GTP = N(6)-(1,2-dicarboxyethyl)-AMP + GDP + phosphate + 2 H(+). It participates in purine metabolism; AMP biosynthesis via de novo pathway; AMP from IMP: step 1/2. Plays an important role in the de novo pathway of purine nucleotide biosynthesis. Catalyzes the first committed step in the biosynthesis of AMP from IMP. In Thermosynechococcus vestitus (strain NIES-2133 / IAM M-273 / BP-1), this protein is Adenylosuccinate synthetase.